The following is a 327-amino-acid chain: Tetraspanin-4 (327 aa).

Residues 1 to 6 (MRSRSN) lie on the Cytoplasmic side of the membrane. A helical membrane pass occupies residues 7–27 (LIGLINFFTFLLSIPILGGGI). Topologically, residues 28–43 (WLSSRANSTDCLRFLQ) are extracellular. Residue asparagine 34 is glycosylated (N-linked (GlcNAc...) asparagine). Residues 44 to 64 (WPLIIIGISIMVISLAGIAGA) form a helical membrane-spanning segment. Residues 65–75 (CYQNKFLMWLY) are Cytoplasmic-facing. Residues 76–96 (LFTMFFVIAALIGFTIFAYVV) traverse the membrane as a helical segment. Residues 97–235 (TDKGSGRFVM…LGSLKKSWRK (139 aa)) lie on the Extracellular side of the membrane. N-linked (GlcNAc...) asparagine glycosylation occurs at asparagine 187. Residues 236–256 (VSVINIVVVIILVIFYVIACA) traverse the membrane as a helical segment. At 257 to 287 (AYQNVKRMYNDEPVGEARMTNLILVIFKFKE) the chain is on the cytoplasmic side. Residues 288 to 308 (ILVQFFFGIVFLLLFNGLMVC) traverse the membrane as a helical segment. The Extracellular segment spans residues 309–327 (CCNDKFAFSVFFFGYVTYA).

The protein belongs to the tetraspanin (TM4SF) family.

It localises to the membrane. In terms of biological role, may be involved in the regulation of cell differentiation. This Arabidopsis thaliana (Mouse-ear cress) protein is Tetraspanin-4 (TET4).